A 594-amino-acid polypeptide reads, in one-letter code: ATP-dependent RNA helicase DBP9 (594 aa).

The Q motif signature appears at 15-43; the sequence is SSFDSFHLDSRLSQAIRSIGFKHPTLIQS. The 183-residue stretch at 47-229 folds into the Helicase ATP-binding domain; it reads PLALQEKRDI…QQFCRSPAIL (183 aa). An ATP-binding site is contributed by 60-67; that stretch reads ASTGSGKT. Positions 175–178 match the DEAD box motif; the sequence is DEVD. The region spanning 242–474 is the Helicase C-terminal domain; sequence KLIQYYVKVG…PYNFDIKQVE (233 aa). Positions 562–594 are disordered; it reads PFHKNSHRKNGRVVKKKGNVQRKGKSDPLKSFK. Residues 565-584 show a composition bias toward basic residues; sequence KNSHRKNGRVVKKKGNVQRK. A compositionally biased stretch (basic and acidic residues) spans 585–594; that stretch reads GKSDPLKSFK.

It belongs to the DEAD box helicase family. DDX56/DBP9 subfamily.

Its subcellular location is the nucleus. It localises to the nucleolus. It catalyses the reaction ATP + H2O = ADP + phosphate + H(+). Functionally, ATP-binding RNA helicase involved in the biogenesis of 60S ribosomal subunits and is required for the normal formation of 25S and 5.8S rRNAs. The polypeptide is ATP-dependent RNA helicase DBP9 (DBP9) (Kluyveromyces lactis (strain ATCC 8585 / CBS 2359 / DSM 70799 / NBRC 1267 / NRRL Y-1140 / WM37) (Yeast)).